Here is an 84-residue protein sequence, read N- to C-terminus: MNSLLMITTCLILIGTVLAEDGYLFDKRKRCTLECIDKTGDKNCDRNCKNEGGSFGKCSYFACWCKGLPGITPISRTPGKTCKI.

The first 19 residues, 1–19, serve as a signal peptide directing secretion; the sequence is MNSLLMITTCLILIGTVLA. Positions 20–83 constitute an LCN-type CS-alpha/beta domain; the sequence is EDGYLFDKRK…ISRTPGKTCK (64 aa). 4 disulfide bridges follow: cysteine 31–cysteine 82, cysteine 35–cysteine 58, cysteine 44–cysteine 63, and cysteine 48–cysteine 65.

It belongs to the long (4 C-C) scorpion toxin superfamily. Sodium channel inhibitor family. Beta subfamily. As to expression, expressed by the venom gland.

It localises to the secreted. Its function is as follows. Beta toxins bind voltage-independently at site-4 of sodium channels (Nav) and shift the voltage of activation toward more negative potentials thereby affecting sodium channel activation and promoting spontaneous and repetitive firing. This is Toxin CsE9 from Centruroides sculpturatus (Arizona bark scorpion).